A 706-amino-acid chain; its full sequence is Protein MAM3 (706 aa).

Residues 1-16 (MSFLPLRSRSRSGAPH) are Vacuolar-facing. Residues 17-37 (WVYIILYHIFTIPKIYSLPLL) traverse the membrane as a helical segment. Topologically, residues 38–65 (SGSHVLNSRDVADSGHSVGDEASVTTYY) are cytoplasmic. One can recognise a CNNM transmembrane domain in the interval 57-240 (DEASVTTYYI…MGVERLTKDE (184 aa)). Residues 66 to 86 (IISIILVLLGGVFAGLTLGLM) form a helical membrane-spanning segment. Over 87–120 (GQDEVYLKVISTSGSNSEKKLAKRVLDLISRGKH) the chain is Vacuolar. Residues 121–141 (WVLVTLLLSNVITNETLPIVL) traverse the membrane as a helical segment. Over 142 to 145 (DRCL) the chain is Cytoplasmic. A helical membrane pass occupies residues 146–166 (GGGWQAVVSSTILIVIFGEII). Residues 167–177 (PQSVCVKYGLQ) are Vacuolar-facing. Residues 178–198 (VGAFFCPFVLVLMYLMYPVAY) traverse the membrane as a helical segment. Topologically, residues 199-706 (PIATLLDYML…ANGSSSTIKR (508 aa)) are cytoplasmic. CBS domains lie at 259-320 (MTPI…DCLP) and 321-386 (ISHF…IVDE). Disordered stretches follow at residues 421–495 (SHKE…ASNP), 515–540 (ITTHTPHSSKEPSPAPHSNDKSLSAE), and 557–597 (LHTQ…ENQN). The span at 433–445 (ESSPLLSPSNSNH) shows a compositional bias: low complexity. Phosphoserine is present on residues Ser439 and Ser447. Positions 472–495 (AVLSPTPQVTEHGTIIPSNLASNP) are enriched in polar residues. Ser527 is subject to Phosphoserine. A compositionally biased stretch (low complexity) spans 566 to 575 (TQVTTSTKTT). The segment covering 576-597 (RNSPDSISIPNSGANHGNENQN) has biased composition (polar residues). A Phosphoserine modification is found at Ser603. Tyr604 is subject to Phosphotyrosine. At Thr607 the chain carries Phosphothreonine. Ser614 is modified (phosphoserine). Positions 626-706 (IGPAKDWDES…ANGSSSTIKR (81 aa)) are disordered. The span at 630-639 (KDWDESKSEY) shows a compositional bias: basic and acidic residues. The segment covering 658–680 (SSSNASLFSSIKNKFKNENANNN) has biased composition (low complexity). The segment covering 681–706 (DRSNFTDSLSRTSNYDANGSSSTIKR) has biased composition (polar residues).

The protein belongs to the ACDP family.

The protein localises to the vacuole membrane. In terms of biological role, involved in metal homeostasis and more specially in manganese sensitivity. In Saccharomyces cerevisiae (strain ATCC 204508 / S288c) (Baker's yeast), this protein is Protein MAM3 (MAM3).